A 364-amino-acid chain; its full sequence is Arabinose metabolism transcriptional repressor (364 aa).

The HTH gntR-type domain maps to 6–74 (LPKYLQLKQE…QGSGTFVSRP (69 aa)). Residues 34–53 (EHEIANQFQLSRHTVRQALG) constitute a DNA-binding region (H-T-H motif).

It is found in the cytoplasm. Its function is as follows. Transcriptional repressor of the arabinose utilization genes. In Geobacillus stearothermophilus (Bacillus stearothermophilus), this protein is Arabinose metabolism transcriptional repressor (araR).